Here is an 84-residue protein sequence, read N- to C-terminus: UPF0298 protein NWMN_0985 (84 aa).

This sequence belongs to the UPF0298 family.

It is found in the cytoplasm. This Staphylococcus aureus (strain Newman) protein is UPF0298 protein NWMN_0985.